A 562-amino-acid polypeptide reads, in one-letter code: Arginine--tRNA ligase (562 aa).

A 'HIGH' region motif is present at residues 122 to 132 (PNIAKPISMGH).

It belongs to the class-I aminoacyl-tRNA synthetase family. As to quaternary structure, monomer.

It is found in the cytoplasm. It catalyses the reaction tRNA(Arg) + L-arginine + ATP = L-arginyl-tRNA(Arg) + AMP + diphosphate. In Pediococcus pentosaceus (strain ATCC 25745 / CCUG 21536 / LMG 10740 / 183-1w), this protein is Arginine--tRNA ligase.